Here is a 151-residue protein sequence, read N- to C-terminus: Small ribosomal subunit protein uS15 (151 aa).

A disordered region spans residues 1–20 (MARLHSGKRGSSGSTRPLRT).

Belongs to the universal ribosomal protein uS15 family. Part of the 30S ribosomal subunit.

In Methanococcus maripaludis (strain C5 / ATCC BAA-1333), this protein is Small ribosomal subunit protein uS15.